Reading from the N-terminus, the 690-residue chain is Guanylate cyclase soluble subunit alpha-1 (690 aa).

Serine 267 carries the phosphoserine modification. Residues 481 to 608 (TMLFSDIVGF…NNVTLANKFE (128 aa)) enclose the Guanylate cyclase domain.

The protein belongs to the adenylyl cyclase class-4/guanylyl cyclase family. The active enzyme is formed by a heterodimer of an alpha and a beta subunit. Heterodimer with GUCY1B1. It depends on Mg(2+) as a cofactor. The cofactor is Mn(2+).

Its subcellular location is the cytoplasm. It catalyses the reaction GTP = 3',5'-cyclic GMP + diphosphate. With respect to regulation, activated by nitric oxide in the presence of magnesium or manganese ions. The polypeptide is Guanylate cyclase soluble subunit alpha-1 (GUCY1A1) (Canis lupus familiaris (Dog)).